Consider the following 73-residue polypeptide: Large ribosomal subunit protein bL28 (73 aa).

It belongs to the bacterial ribosomal protein bL28 family.

This chain is Large ribosomal subunit protein bL28, found in Anaeromyxobacter dehalogenans (strain 2CP-1 / ATCC BAA-258).